The primary structure comprises 43 residues: Metallothionein A (43 aa).

The segment at 1-16 (SCAGSCKCKNCRCRSC) is beta. A divalent metal cation contacts are provided by C2, C6, C8, C11, C13, C16, C20, C21, C23, C24, C28, C31, C35, and C37. The segment at 17–43 (RKSCCSCCPAGCNNCAKGCVCKEPASS) is alpha.

The protein belongs to the metallothionein superfamily. Type 1 family.

Its function is as follows. Metallothioneins have a high content of cysteine residues that bind various heavy metals. The chain is Metallothionein A from Colinus virginianus (Northern bobwhite).